We begin with the raw amino-acid sequence, 273 residues long: MPELPEVETVRRELEKRIVGQKIISIEATYPRMVLTGFEQLKKELTGKTIQGISRRGKYLIFEIGDDFRLISHLRMEGKYRLATLDAPREKHDHLTMKFADGQLIYADVRKFGTWELISTDQVLPYFLKKKIGPEPTYDEDFDEKLFREKLRKSTKKIKPYLLEQTLVAGLGNIYVDEVLWLAKIHPEKETNQLIESSIHLLHDSIIEILQKAIKLGGSSIRTYSALGSTGKMQNELQVYGKTGEKCSRCGAEIQKIKVAGRGTHFCPVCQQK.

The Schiff-base intermediate with DNA role is filled by Pro-2. The Proton donor role is filled by Glu-3. Lys-58 acts as the Proton donor; for beta-elimination activity in catalysis. A DNA-binding region spans residues 58-76; it reads KYLIFEIGDDFRLISHLRM. DNA-binding residues include His-92 and Arg-110. A DNA-binding region spans residues 162-172; the sequence is LLEQTLVAGLG. The FPG-type zinc finger occupies 238 to 272; sequence QVYGKTGEKCSRCGAEIQKIKVAGRGTHFCPVCQQ. Catalysis depends on Arg-262, which acts as the Proton donor; for delta-elimination activity.

The protein belongs to the FPG family. As to quaternary structure, monomer. Zn(2+) serves as cofactor.

It catalyses the reaction Hydrolysis of DNA containing ring-opened 7-methylguanine residues, releasing 2,6-diamino-4-hydroxy-5-(N-methyl)formamidopyrimidine.. It carries out the reaction 2'-deoxyribonucleotide-(2'-deoxyribose 5'-phosphate)-2'-deoxyribonucleotide-DNA = a 3'-end 2'-deoxyribonucleotide-(2,3-dehydro-2,3-deoxyribose 5'-phosphate)-DNA + a 5'-end 5'-phospho-2'-deoxyribonucleoside-DNA + H(+). Functionally, involved in base excision repair of DNA damaged by oxidation or by mutagenic agents. Acts as a DNA glycosylase that recognizes and removes damaged bases. Has a preference for oxidized purines, such as 7,8-dihydro-8-oxoguanine (8-oxoG). Has AP (apurinic/apyrimidinic) lyase activity and introduces nicks in the DNA strand. Cleaves the DNA backbone by beta-delta elimination to generate a single-strand break at the site of the removed base with both 3'- and 5'-phosphates. The protein is Formamidopyrimidine-DNA glycosylase (mutM) of Lactococcus lactis subsp. cremoris (Streptococcus cremoris).